We begin with the raw amino-acid sequence, 451 residues long: Phosphoglucosamine mutase (451 aa).

Ser101 functions as the Phosphoserine intermediate in the catalytic mechanism. Mg(2+) is bound by residues Ser101, Asp241, Asp243, and Asp245. Ser101 carries the phosphoserine modification.

Belongs to the phosphohexose mutase family. Mg(2+) serves as cofactor. Activated by phosphorylation.

It catalyses the reaction alpha-D-glucosamine 1-phosphate = D-glucosamine 6-phosphate. Its function is as follows. Catalyzes the conversion of glucosamine-6-phosphate to glucosamine-1-phosphate. The polypeptide is Phosphoglucosamine mutase (Exiguobacterium sibiricum (strain DSM 17290 / CCUG 55495 / CIP 109462 / JCM 13490 / 255-15)).